The primary structure comprises 518 residues: Chromosomal replication initiator protein DnaA (518 aa).

The segment at 1–72 (MTLAEFWPLC…VREELAAGRS (72 aa)) is domain I, interacts with DnaA modulators. The domain II stretch occupies residues 72-180 (SAFVFKPGEG…DAEEARYEQT (109 aa)). Residues 145–172 (EPRQAAGSASRPESVAVAKARTDVQRDA) form a disordered region. The interval 181 to 397 (NLSPDYTFDT…GAFNRVGASS (217 aa)) is domain III, AAA+ region. The ATP site is built by G225, G227, K228, and T229. The tract at residues 398–518 (RFMNRPVIDI…YEKLLILIQN (121 aa)) is domain IV, binds dsDNA.

The protein belongs to the DnaA family. As to quaternary structure, oligomerizes as a right-handed, spiral filament on DNA at oriC.

Its subcellular location is the cytoplasm. Plays an essential role in the initiation and regulation of chromosomal replication. ATP-DnaA binds to the origin of replication (oriC) to initiate formation of the DNA replication initiation complex once per cell cycle. Binds the DnaA box (a 9 base pair repeat at the origin) and separates the double-stranded (ds)DNA. Forms a right-handed helical filament on oriC DNA; dsDNA binds to the exterior of the filament while single-stranded (ss)DNA is stabiized in the filament's interior. The ATP-DnaA-oriC complex binds and stabilizes one strand of the AT-rich DNA unwinding element (DUE), permitting loading of DNA polymerase. After initiation quickly degrades to an ADP-DnaA complex that is not apt for DNA replication. Binds acidic phospholipids. This Neisseria meningitidis serogroup B (strain ATCC BAA-335 / MC58) protein is Chromosomal replication initiator protein DnaA.